A 125-amino-acid chain; its full sequence is Small ribosomal subunit protein uS12 (125 aa).

The residue at position 89 (Asp-89) is a 3-methylthioaspartic acid.

It belongs to the universal ribosomal protein uS12 family. Part of the 30S ribosomal subunit. Contacts proteins S8 and S17. May interact with IF1 in the 30S initiation complex.

With S4 and S5 plays an important role in translational accuracy. Its function is as follows. Interacts with and stabilizes bases of the 16S rRNA that are involved in tRNA selection in the A site and with the mRNA backbone. Located at the interface of the 30S and 50S subunits, it traverses the body of the 30S subunit contacting proteins on the other side and probably holding the rRNA structure together. The combined cluster of proteins S8, S12 and S17 appears to hold together the shoulder and platform of the 30S subunit. The polypeptide is Small ribosomal subunit protein uS12 (Wigglesworthia glossinidia brevipalpis).